A 368-amino-acid polypeptide reads, in one-letter code: Dihydroorotate dehydrogenase (quinone) (368 aa).

FMN is bound by residues 67 to 71 (AGFDK) and T91. K71 provides a ligand contact to substrate. Residue 116–120 (NRMGF) participates in substrate binding. FMN is bound by residues N146 and N179. N179 provides a ligand contact to substrate. The active-site Nucleophile is the S182. N184 contributes to the substrate binding site. Residues K222 and T250 each contribute to the FMN site. 251 to 252 (NT) is a binding site for substrate. FMN-binding positions include G276, G305, and 326–327 (YS).

This sequence belongs to the dihydroorotate dehydrogenase family. Type 2 subfamily. As to quaternary structure, monomer. The cofactor is FMN.

It is found in the cell membrane. It catalyses the reaction (S)-dihydroorotate + a quinone = orotate + a quinol. The protein operates within pyrimidine metabolism; UMP biosynthesis via de novo pathway; orotate from (S)-dihydroorotate (quinone route): step 1/1. Functionally, catalyzes the conversion of dihydroorotate to orotate with quinone as electron acceptor. The chain is Dihydroorotate dehydrogenase (quinone) from Streptomyces coelicolor (strain ATCC BAA-471 / A3(2) / M145).